Here is a 906-residue protein sequence, read N- to C-terminus: MTSLDSFKCKKTLKVGAKTYVYYSLPTAEKNGLKGISKLPYSMKVLLENLLRNEDGRSVKKADIVAVSKWLRKKSLEHEIAFRPARVLMQDFTGVPAVVDLAAMRNAMQKLGGDAEKINPLVPVDLVIDHSVIVNFFGDNKAFAKNVTEEYKQNQERYEFLKWGQAAFSNFSVVPPGTGICHQVNLEYLSQTVWTKKEKMTVGKKTGTFEVAYPDSLVGTDSHTTMVNGLAVLGWGVGGIEAEACMLGQPLSMLLPNVVGFKLKGAMKEGVTATDLVLTVTQMLRKLGVVGKFVEFFGPGLDHLSVADKATIANMAPEYGATCGFFPVDAAAIDYLKTSGRAAPRVALVQAYAKAQGLFRTAKSADPVFTETLTLDLADVVPSMAGPKRPEGRIALPSVAEGFSVALANEYKKTEEPAKRFAVEGKKYEIGHGDVVIAAITSCTNTSNPSVLIGAGLLARNAAAKGLKAKPWVKTSLAPGSQVVAAYLADSGLQAHLDKVGFNLVGFGCTTCIGNSGPLPEEISKSINDNGIVAAAVLSGNRNFEGRVSPDVQANYLASPPLVVAHALAGSVTKNLAVEPLGEGKDGKPVYLKDIWPTSKEINAFMKKFVTASIFKKKYADVFKGDTNWRKIKTVESETYRWNMSSTYVQNPPYFEGMKKEPEPVTDIVEARILAMFGDKITTDHISPAGSIKLTSPAGKYLSEHQVRPADFNQYGTRRGNHEVMMRGTFANIRIKNFMLKGADGNIPEGGLTKHWPDGEQMSIYDAAMKYQQEQVPLVVFAGAEYGNGSSRDWAAKGTRLLGVRAVICQSFERIHRSNLVGMGVLPLTFEEGTSWSSLGLKGDEKVTLRGLVGDLKPRQKLTAEIVSGDGSLQRVSLLCRIDTLDELDYYRNGGILHYVLRKLAA.

Residues C443, C509, and C512 each coordinate [4Fe-4S] cluster.

It belongs to the aconitase/IPM isomerase family. As to quaternary structure, monomer. [4Fe-4S] cluster serves as cofactor.

The enzyme catalyses citrate = D-threo-isocitrate. It carries out the reaction (2S,3R)-3-hydroxybutane-1,2,3-tricarboxylate = 2-methyl-cis-aconitate + H2O. It participates in carbohydrate metabolism; tricarboxylic acid cycle; isocitrate from oxaloacetate: step 2/2. Its pathway is organic acid metabolism; propanoate degradation. In terms of biological role, involved in the catabolism of short chain fatty acids (SCFA) via the tricarboxylic acid (TCA)(acetyl degradation route) and probably via the 2-methylcitrate cycle I (propionate degradation route). Catalyzes the reversible isomerization of citrate to isocitrate via cis-aconitate. Could catalyze the hydration of 2-methyl-cis-aconitate to yield (2R,3S)-2-methylisocitrate. The apo form of AcnA functions as a RNA-binding regulatory protein. This chain is Aconitate hydratase A, found in Bradyrhizobium diazoefficiens (strain JCM 10833 / BCRC 13528 / IAM 13628 / NBRC 14792 / USDA 110).